The sequence spans 662 residues: UvrABC system protein B (662 aa).

The Helicase ATP-binding domain maps to 25 to 412 (EGIEKGLKMQ…SQKIVEQIIR (388 aa)). 38 to 45 (GVTGSGKT) serves as a coordination point for ATP. Residues 91–114 (YYDYYQPEAYLPATDTYIEKDSAI) carry the Beta-hairpin motif. One can recognise a Helicase C-terminal domain in the interval 429-595 (QVDDLYGEIK…TVQKAVRDVI (167 aa)). One can recognise a UVR domain in the interval 622 to 657 (KQYVEKLTREMKEAAKALEFEKAAMLRDLIIELRAQ).

It belongs to the UvrB family. Forms a heterotetramer with UvrA during the search for lesions. Interacts with UvrC in an incision complex.

The protein resides in the cytoplasm. Its function is as follows. The UvrABC repair system catalyzes the recognition and processing of DNA lesions. A damage recognition complex composed of 2 UvrA and 2 UvrB subunits scans DNA for abnormalities. Upon binding of the UvrA(2)B(2) complex to a putative damaged site, the DNA wraps around one UvrB monomer. DNA wrap is dependent on ATP binding by UvrB and probably causes local melting of the DNA helix, facilitating insertion of UvrB beta-hairpin between the DNA strands. Then UvrB probes one DNA strand for the presence of a lesion. If a lesion is found the UvrA subunits dissociate and the UvrB-DNA preincision complex is formed. This complex is subsequently bound by UvrC and the second UvrB is released. If no lesion is found, the DNA wraps around the other UvrB subunit that will check the other stand for damage. The chain is UvrABC system protein B from Carboxydothermus hydrogenoformans (strain ATCC BAA-161 / DSM 6008 / Z-2901).